A 99-amino-acid polypeptide reads, in one-letter code: Large ribosomal subunit protein bL21 (99 aa).

The protein belongs to the bacterial ribosomal protein bL21 family. Part of the 50S ribosomal subunit. Contacts protein L20.

In terms of biological role, this protein binds to 23S rRNA in the presence of protein L20. In Mycoplasmopsis pulmonis (strain UAB CTIP) (Mycoplasma pulmonis), this protein is Large ribosomal subunit protein bL21.